The primary structure comprises 699 residues: Elongation factor G (699 aa).

Positions 8-288 (EDYRNFGIMA…AVVDYLPSPV (281 aa)) constitute a tr-type G domain. Residues 17–24 (AHIDAGKT), 86–90 (DTPGH), and 140–143 (NKMD) each bind GTP.

This sequence belongs to the TRAFAC class translation factor GTPase superfamily. Classic translation factor GTPase family. EF-G/EF-2 subfamily.

It localises to the cytoplasm. Functionally, catalyzes the GTP-dependent ribosomal translocation step during translation elongation. During this step, the ribosome changes from the pre-translocational (PRE) to the post-translocational (POST) state as the newly formed A-site-bound peptidyl-tRNA and P-site-bound deacylated tRNA move to the P and E sites, respectively. Catalyzes the coordinated movement of the two tRNA molecules, the mRNA and conformational changes in the ribosome. The protein is Elongation factor G of Sinorhizobium medicae (strain WSM419) (Ensifer medicae).